The primary structure comprises 265 residues: Hydroxyethylthiazole kinase (265 aa).

Met50 is a substrate binding site. ATP-binding residues include Arg125 and Thr171. Gly198 is a substrate binding site.

This sequence belongs to the Thz kinase family. It depends on Mg(2+) as a cofactor.

It carries out the reaction 5-(2-hydroxyethyl)-4-methylthiazole + ATP = 4-methyl-5-(2-phosphooxyethyl)-thiazole + ADP + H(+). The protein operates within cofactor biosynthesis; thiamine diphosphate biosynthesis; 4-methyl-5-(2-phosphoethyl)-thiazole from 5-(2-hydroxyethyl)-4-methylthiazole: step 1/1. Functionally, catalyzes the phosphorylation of the hydroxyl group of 4-methyl-5-beta-hydroxyethylthiazole (THZ). This is Hydroxyethylthiazole kinase from Salmonella typhimurium (strain LT2 / SGSC1412 / ATCC 700720).